Consider the following 207-residue polypeptide: Ribosomal RNA small subunit methyltransferase G (207 aa).

Residues glycine 73, leucine 78, 124 to 125 (VE), and arginine 139 each bind S-adenosyl-L-methionine.

The protein belongs to the methyltransferase superfamily. RNA methyltransferase RsmG family.

It is found in the cytoplasm. The enzyme catalyses guanosine(527) in 16S rRNA + S-adenosyl-L-methionine = N(7)-methylguanosine(527) in 16S rRNA + S-adenosyl-L-homocysteine. In terms of biological role, specifically methylates the N7 position of guanine in position 527 of 16S rRNA. The polypeptide is Ribosomal RNA small subunit methyltransferase G (Salmonella schwarzengrund (strain CVM19633)).